The primary structure comprises 212 residues: Thymidylate kinase (212 aa).

Residue 11 to 18 (GGEGVGKS) participates in ATP binding.

It belongs to the thymidylate kinase family.

The enzyme catalyses dTMP + ATP = dTDP + ADP. Phosphorylation of dTMP to form dTDP in both de novo and salvage pathways of dTTP synthesis. The chain is Thymidylate kinase from Chromohalobacter salexigens (strain ATCC BAA-138 / DSM 3043 / CIP 106854 / NCIMB 13768 / 1H11).